The primary structure comprises 335 residues: Phosphate acyltransferase (335 aa).

It belongs to the PlsX family. As to quaternary structure, homodimer. Probably interacts with PlsY.

Its subcellular location is the cytoplasm. The catalysed reaction is a fatty acyl-[ACP] + phosphate = an acyl phosphate + holo-[ACP]. Its pathway is lipid metabolism; phospholipid metabolism. In terms of biological role, catalyzes the reversible formation of acyl-phosphate (acyl-PO(4)) from acyl-[acyl-carrier-protein] (acyl-ACP). This enzyme utilizes acyl-ACP as fatty acyl donor, but not acyl-CoA. This Streptococcus equi subsp. zooepidemicus (strain MGCS10565) protein is Phosphate acyltransferase.